The primary structure comprises 513 residues: Alpha-1B-glycoprotein (513 aa).

Positions 1 to 20 (MSLLTTVLLLWGFTLGPGNA) are cleaved as a signal peptide. 5 consecutive Ig-like V-type domains span residues 22-126 (WLDS…VTGK), 127-219 (EPLP…MSAT), 220-312 (QLPP…PVEL), 313-415 (MWSD…LRIN), and 416-513 (GPAP…VEGS). Residues Asn44, Asn89, and Asn192 are each glycosylated (N-linked (GlcNAc...) asparagine). 5 cysteine pairs are disulfide-bonded: Cys49-Cys96, Cys153-Cys195, Cys245-Cys292, Cys343-Cys392, and Cys441-Cys488. 4 N-linked (GlcNAc...) asparagine glycosylation sites follow: Asn369, Asn381, Asn389, and Asn485.

Interacts with CRISP3. In terms of tissue distribution, isoform 1 is expressed in normal liver. Isoform 2 is expressed in the regenerating liver after partial hepatectomy and at very low levels in the normal lung, brain and testis.

It localises to the secreted. The sequence is that of Alpha-1B-glycoprotein from Rattus norvegicus (Rat).